Here is a 91-residue protein sequence, read N- to C-terminus: Ragulator complex protein LAMTOR5 (91 aa).

The protein belongs to the LAMTOR5 family. In terms of assembly, part of the Ragulator complex composed of lamtor1, lamtor2, lamtor3, lamtor4 and lamtor5. The Ragulator complex interacts with slc38a9; the probable amino acid sensor. Component of the lysosomal folliculin complex (LFC).

It is found in the cytoplasm. The protein localises to the lysosome. In terms of biological role, as part of the Ragulator complex it is involved in amino acid sensing and activation of mTORC1, a signaling complex promoting cell growth in response to growth factors, energy levels, and amino acids. Activated by amino acids through a mechanism involving the lysosomal V-ATPase, the Ragulator plays a dual role for the small GTPases Rag (RagA/RRAGA, RagB/RRAGB, RagC/RRAGC and/or RagD/RRAGD): it (1) acts as a guanine nucleotide exchange factor (GEF), activating the small GTPases Rag and (2) mediates recruitment of Rag GTPases to the lysosome membrane. Activated Ragulator and Rag GTPases function as a scaffold recruiting mTORC1 to lysosomes where it is in turn activated. The chain is Ragulator complex protein LAMTOR5 (lamtor5) from Xenopus tropicalis (Western clawed frog).